The chain runs to 475 residues: Polyphosphate:AMP phosphotransferase (475 aa).

PPK2 regions lie at residues 18-222 and 256-472; these read LDLI…LTAL and ANYK…KADR.

The protein belongs to the polyphosphate kinase 2 (PPK2) family. Class II subfamily. Homodimer and homotetramer. Requires Mg(2+) as cofactor.

It catalyses the reaction [phosphate](n) + ADP = [phosphate](n+1) + AMP. Its function is as follows. Uses inorganic polyphosphate (polyP) as a donor to convert AMP to ADP. Can also use GMP, UMP, CMP, TMP or deoxyribonucleoside monophosphates, with lower efficiency. Cannot use low-molecular weight polyP as donors. Can also catalyze the synthesis of polyP from ADP or GDP, with lower efficiency. This chain is Polyphosphate:AMP phosphotransferase, found in Acinetobacter johnsonii.